Reading from the N-terminus, the 284-residue chain is D-tagatose-1,6-bisphosphate aldolase subunit GatY (284 aa).

Residue D82 is the Proton donor of the active site. 2 residues coordinate Zn(2+): H83 and H180. G181 lines the dihydroxyacetone phosphate pocket. H208 lines the Zn(2+) pocket. Dihydroxyacetone phosphate-binding positions include 209-211 (GAS) and 230-233 (NVAT).

Belongs to the class II fructose-bisphosphate aldolase family. TagBP aldolase GatY subfamily. As to quaternary structure, forms a complex with GatZ. Requires Zn(2+) as cofactor.

It carries out the reaction D-tagatofuranose 1,6-bisphosphate = D-glyceraldehyde 3-phosphate + dihydroxyacetone phosphate. Its pathway is carbohydrate metabolism; D-tagatose 6-phosphate degradation; D-glyceraldehyde 3-phosphate and glycerone phosphate from D-tagatose 6-phosphate: step 2/2. In terms of biological role, catalytic subunit of the tagatose-1,6-bisphosphate aldolase GatYZ, which catalyzes the reversible aldol condensation of dihydroxyacetone phosphate (DHAP or glycerone-phosphate) with glyceraldehyde 3-phosphate (G3P) to produce tagatose 1,6-bisphosphate (TBP). Requires GatZ subunit for full activity and stability. Is involved in the catabolism of galactitol. This Escherichia coli O6:H1 (strain CFT073 / ATCC 700928 / UPEC) protein is D-tagatose-1,6-bisphosphate aldolase subunit GatY.